A 162-amino-acid chain; its full sequence is Ribosome maturation factor RimP (162 aa).

Belongs to the RimP family.

It localises to the cytoplasm. Its function is as follows. Required for maturation of 30S ribosomal subunits. In Ralstonia nicotianae (strain ATCC BAA-1114 / GMI1000) (Ralstonia solanacearum), this protein is Ribosome maturation factor RimP.